Here is a 56-residue protein sequence, read N- to C-terminus: Large ribosomal subunit protein uL30 (56 aa).

It belongs to the universal ribosomal protein uL30 family. In terms of assembly, part of the 50S ribosomal subunit.

The polypeptide is Large ribosomal subunit protein uL30 (Oleidesulfovibrio alaskensis (strain ATCC BAA-1058 / DSM 17464 / G20) (Desulfovibrio alaskensis)).